The chain runs to 99 residues: MSQISRDEVAHLARLARLALTDSELDSFAGQLDAILGHVGQIQTVDVTGVEATGNPLKDVNVFRPDVEAPSLTQEQALAAAPNTDEGRFAVPRILGEAE.

Belongs to the GatC family. As to quaternary structure, heterotrimer of A, B and C subunits.

The catalysed reaction is L-glutamyl-tRNA(Gln) + L-glutamine + ATP + H2O = L-glutaminyl-tRNA(Gln) + L-glutamate + ADP + phosphate + H(+). It carries out the reaction L-aspartyl-tRNA(Asn) + L-glutamine + ATP + H2O = L-asparaginyl-tRNA(Asn) + L-glutamate + ADP + phosphate + 2 H(+). Allows the formation of correctly charged Asn-tRNA(Asn) or Gln-tRNA(Gln) through the transamidation of misacylated Asp-tRNA(Asn) or Glu-tRNA(Gln) in organisms which lack either or both of asparaginyl-tRNA or glutaminyl-tRNA synthetases. The reaction takes place in the presence of glutamine and ATP through an activated phospho-Asp-tRNA(Asn) or phospho-Glu-tRNA(Gln). The sequence is that of Aspartyl/glutamyl-tRNA(Asn/Gln) amidotransferase subunit C from Mycolicibacterium vanbaalenii (strain DSM 7251 / JCM 13017 / BCRC 16820 / KCTC 9966 / NRRL B-24157 / PYR-1) (Mycobacterium vanbaalenii).